A 340-amino-acid polypeptide reads, in one-letter code: UDP-N-acetylenolpyruvoylglucosamine reductase (340 aa).

One can recognise an FAD-binding PCMH-type domain in the interval 11 to 181; sequence ISVKAKKIIS…VAIGLKLKKK (171 aa). The active site involves Arg156. The active-site Proton donor is Ser227. Glu323 is a catalytic residue.

This sequence belongs to the MurB family. The cofactor is FAD.

The protein localises to the cytoplasm. The catalysed reaction is UDP-N-acetyl-alpha-D-muramate + NADP(+) = UDP-N-acetyl-3-O-(1-carboxyvinyl)-alpha-D-glucosamine + NADPH + H(+). It participates in cell wall biogenesis; peptidoglycan biosynthesis. Its function is as follows. Cell wall formation. In Wigglesworthia glossinidia brevipalpis, this protein is UDP-N-acetylenolpyruvoylglucosamine reductase.